The primary structure comprises 90 residues: Putative beta-neurotoxin RjAa14F (90 aa).

The first 18 residues, 1–18 (MKILIFIIASFMLIGVEC), serve as a signal peptide directing secretion. In terms of domain architecture, LCN-type CS-alpha/beta spans 19 to 89 (KEGYPTNSEG…VWDPNNNKCV (71 aa)). 4 disulfides stabilise this stretch: Cys29–Cys88, Cys33–Cys62, Cys40–Cys69, and Cys44–Cys71.

It belongs to the long (4 C-C) scorpion toxin superfamily. Sodium channel inhibitor family. Beta subfamily. As to expression, expressed by the venom gland.

The protein localises to the secreted. In terms of biological role, beta toxins bind voltage-independently at site-4 of sodium channels (Nav) and shift the voltage of activation toward more negative potentials thereby affecting sodium channel activation and promoting spontaneous and repetitive firing. This is Putative beta-neurotoxin RjAa14F from Rhopalurus junceus (Caribbean blue scorpion).